A 267-amino-acid polypeptide reads, in one-letter code: Formamidopyrimidine-DNA glycosylase (267 aa).

The Schiff-base intermediate with DNA role is filled by P2. Catalysis depends on E3, which acts as the Proton donor. Residue K58 is the Proton donor; for beta-elimination activity of the active site. Positions 91, 110, and 152 each coordinate DNA. An FPG-type zinc finger spans residues 233 to 267 (DVYGRGHGTCTSCGGALEAVRLGNRSTVFCPRCQQ). R257 (proton donor; for delta-elimination activity) is an active-site residue.

The protein belongs to the FPG family. As to quaternary structure, monomer. It depends on Zn(2+) as a cofactor.

The enzyme catalyses Hydrolysis of DNA containing ring-opened 7-methylguanine residues, releasing 2,6-diamino-4-hydroxy-5-(N-methyl)formamidopyrimidine.. The catalysed reaction is 2'-deoxyribonucleotide-(2'-deoxyribose 5'-phosphate)-2'-deoxyribonucleotide-DNA = a 3'-end 2'-deoxyribonucleotide-(2,3-dehydro-2,3-deoxyribose 5'-phosphate)-DNA + a 5'-end 5'-phospho-2'-deoxyribonucleoside-DNA + H(+). Functionally, involved in base excision repair of DNA damaged by oxidation or by mutagenic agents. Acts as a DNA glycosylase that recognizes and removes damaged bases. Has a preference for oxidized purines, such as 7,8-dihydro-8-oxoguanine (8-oxoG). Has AP (apurinic/apyrimidinic) lyase activity and introduces nicks in the DNA strand. Cleaves the DNA backbone by beta-delta elimination to generate a single-strand break at the site of the removed base with both 3'- and 5'-phosphates. The polypeptide is Formamidopyrimidine-DNA glycosylase (Pelobacter propionicus (strain DSM 2379 / NBRC 103807 / OttBd1)).